Consider the following 371-residue polypeptide: 3-isopropylmalate dehydrogenase B (371 aa).

79–93 provides a ligand contact to NAD(+); sequence GSKVDHIRRGLDGPE. Positions 100, 110, 142, and 229 each coordinate substrate. Mg(2+) is bound by residues aspartate 229, aspartate 254, and aspartate 258. An NAD(+)-binding site is contributed by 296–308; it reads GSAPTIAGKNIAN.

It belongs to the isocitrate and isopropylmalate dehydrogenases family. In terms of assembly, homodimer. It depends on Mg(2+) as a cofactor. Requires Mn(2+) as cofactor.

The protein resides in the cytoplasm. It catalyses the reaction (2R,3S)-3-isopropylmalate + NAD(+) = 4-methyl-2-oxopentanoate + CO2 + NADH. It participates in amino-acid biosynthesis; L-leucine biosynthesis; L-leucine from 3-methyl-2-oxobutanoate: step 3/4. Catalyzes the oxidation of 3-carboxy-2-hydroxy-4-methylpentanoate (3-isopropylmalate) to 3-carboxy-4-methyl-2-oxopentanoate. The product decarboxylates to 4-methyl-2 oxopentanoate. The chain is 3-isopropylmalate dehydrogenase B (leu2B) from Aspergillus niger.